The sequence spans 421 residues: C4-dicarboxylate transport protein (421 aa).

A run of 8 helical transmembrane segments spans residues 9–29, 39–59, 76–96, 145–165, 185–205, 219–239, 316–336, and 348–368; these read VQVITAVIIGVIVGLVWPDVG, FINAVKMVIAPIIFFTIVLGI, FIYFEVVTTLALIIGLFVVNI, GDILQVLFFSILFGVGLAALG, IIGYIMRAAPIGAFGAMAYTI, LMMSVYITMFLFVFVALNIIC, VFGVDLSIGQQITIILVLMLT, and FIVLASTLSALQVIPLEGLAL.

This sequence belongs to the dicarboxylate/amino acid:cation symporter (DAACS) (TC 2.A.23) family.

It is found in the cell membrane. Functionally, responsible for the transport of succinate and fumarate, but not malate, across the membrane. The chain is C4-dicarboxylate transport protein (dctA) from Bacillus subtilis (strain 168).